Reading from the N-terminus, the 374-residue chain is Chaperone protein DnaJ (374 aa).

Positions 5–70 (DYYEVLGVNL…RKRASYDQFG (66 aa)) constitute a J domain. Residues 133 to 210 (GLSRTIKVPT…CHGQGRQQQT (78 aa)) form a CR-type zinc finger. Zn(2+) contacts are provided by Cys146, Cys149, Cys162, Cys165, Cys184, Cys187, Cys198, and Cys201. CXXCXGXG motif repeat units lie at residues 146–153 (CKTCNGSG), 162–169 (CPRCNGSG), 184–191 (CSVCRGRG), and 198–205 (CTDCHGQG).

It belongs to the DnaJ family. As to quaternary structure, homodimer. Zn(2+) is required as a cofactor.

The protein localises to the cytoplasm. Its function is as follows. Participates actively in the response to hyperosmotic and heat shock by preventing the aggregation of stress-denatured proteins and by disaggregating proteins, also in an autonomous, DnaK-independent fashion. Unfolded proteins bind initially to DnaJ; upon interaction with the DnaJ-bound protein, DnaK hydrolyzes its bound ATP, resulting in the formation of a stable complex. GrpE releases ADP from DnaK; ATP binding to DnaK triggers the release of the substrate protein, thus completing the reaction cycle. Several rounds of ATP-dependent interactions between DnaJ, DnaK and GrpE are required for fully efficient folding. Also involved, together with DnaK and GrpE, in the DNA replication of plasmids through activation of initiation proteins. The protein is Chaperone protein DnaJ of Coxiella burnetii (strain RSA 493 / Nine Mile phase I).